The sequence spans 118 residues: Ribonuclease P protein component (118 aa).

This sequence belongs to the RnpA family. Consists of a catalytic RNA component (M1 or rnpB) and a protein subunit.

The catalysed reaction is Endonucleolytic cleavage of RNA, removing 5'-extranucleotides from tRNA precursor.. In terms of biological role, RNaseP catalyzes the removal of the 5'-leader sequence from pre-tRNA to produce the mature 5'-terminus. It can also cleave other RNA substrates such as 4.5S RNA. The protein component plays an auxiliary but essential role in vivo by binding to the 5'-leader sequence and broadening the substrate specificity of the ribozyme. In Rickettsia typhi (strain ATCC VR-144 / Wilmington), this protein is Ribonuclease P protein component.